Reading from the N-terminus, the 595-residue chain is Sucrose transport protein SUT4 (595 aa).

Over 1–61 (MDSAAGGGGL…PAARTTTTRK (61 aa)) the chain is Cytoplasmic. Positions 29–55 (SLNGGTPRGGSPKDPDATHQQGPPAAR) are disordered. A helical transmembrane segment spans residues 62-82 (LVLACMVAAGVQFGWALQLSL). Residues 83-97 (LTPYIQTLGIDHAMA) are Extracellular-facing. Residues 98 to 118 (SFIWLCGPITGFVVQPCVGVW) form a helical membrane-spanning segment. At 119-130 (SDKCRSKYGRRR) the chain is on the cytoplasmic side. Residues 131 to 151 (PFILAGCLMICFAVTLIGFSA) form a helical membrane-spanning segment. Residues 152-173 (DLGYILGDTTEHCSTYKGSRFR) are Extracellular-facing. The chain crosses the membrane as a helical span at residues 174–194 (AAIIFVLGFWMLDLANNTVQG). The Cytoplasmic segment spans residues 195–213 (PARALLADLSGPDQCNSAN). Residues 214–234 (AIFCTWMAVGNVLGFSSGASG) form a helical membrane-spanning segment. Topologically, residues 235-256 (NWHKWFPFLMTRACCEACSNLK) are extracellular. The helical transmembrane segment at 257–277 (AAFLVAVVFLLFCMSVTLYFA) threads the bilayer. Residues 278–365 (EEIPLEPTDA…LTSMRHLPPG (88 aa)) are Cytoplasmic-facing. The disordered stretch occupies residues 291–340 (SDSAPLLNGSRDDNNASNEPRNGALPNGHTDGSNVPANSNAEDSNSNREN). Residues 320–334 (TDGSNVPANSNAEDS) are compositionally biased toward polar residues. A helical transmembrane segment spans residues 366 to 386 (MYSVLLVMALTWLSWFPFFLF). At 387 to 417 (DTDWMGREVYHGDPNGNLSERKAYDNGVREG) the chain is on the extracellular side. N403 is a glycosylation site (N-linked (GlcNAc...) asparagine). A helical transmembrane segment spans residues 418–438 (AFGLLLNSVVLGIGSFLVDPL). Residues 439–447 (CRLMGARLV) are Cytoplasmic-facing. The chain crosses the membrane as a helical span at residues 448 to 468 (WAISNFTVFICMLATAILSWI). Over 469 to 491 (SFDLYSSKLHHIIGANKTVKNSA) the chain is Extracellular. N-linked (GlcNAc...) asparagine glycosylation is present at N484. Residues 492–512 (LIVFSLLGLPLSITYSVPFSV) form a helical membrane-spanning segment. Over 513–525 (TAELTAGTGGGQG) the chain is Cytoplasmic. The helical transmembrane segment at 526 to 546 (LATGVLNLAIVVPQIVVSLGA) threads the bilayer. At 547 to 556 (GPWDALFGGG) the chain is on the extracellular side. A helical membrane pass occupies residues 557-577 (NVPAFALASVFSLGAGVLAVL). Over 578-595 (KLPKLPNSYRSAGFHGFG) the chain is Cytoplasmic.

This sequence belongs to the glycoside-pentoside-hexuronide (GPH) cation symporter transporter (TC 2.A.2.4) family. Homodimer.

The protein localises to the cell membrane. Its pathway is glycan biosynthesis; sucrose metabolism. Functionally, responsible for the transport of sucrose into the cell, with the concomitant uptake of protons (symport system). May also transport other glucosides. This is Sucrose transport protein SUT4 (SUT4) from Oryza sativa subsp. indica (Rice).